We begin with the raw amino-acid sequence, 210 residues long: Transcriptional regulator MxiE (210 aa).

Residues 99–199 enclose the HTH araC/xylS-type domain; it reads YHLVLYLLRT…GFSARELSNI (101 aa). DNA-binding regions (H-T-H motif) lie at residues 118–139 and 166–189; these read KSLT…RKAL and ITSA…KTRL.

Functionally, necessary for the secretion of ipa invasins. Probable transcriptional regulatory protein. This Shigella flexneri protein is Transcriptional regulator MxiE (mxiE).